A 116-amino-acid chain; its full sequence is Spexin (116 aa).

An N-terminal signal peptide occupies residues 1–26 (MKGPSILAVAALALLLVLSVLENSSG). Positions 27 to 35 (APQRLSEKR) are excised as a propeptide. Glutamine amide is present on Q49. 2 propeptides span residues 50–116 (GHRF…RFYW) and 74–116 (PNLQ…RFYW). A compositionally biased stretch (basic and acidic residues) spans 56-73 (DQSRRKELADRPPPERRN). A disordered region spans residues 56-75 (DQSRRKELADRPPPERRNPN).

The protein belongs to the spexin family. As to expression, widely expressed; predominantly expressed in epithelial cells in the skin, respiratory, digestive, urinary and reproductive systems, retina, adrenal gland and various brain regions. In the adrenal gland, expressed in parenchymal cells of the cortex and in ganglionic cells and intermingled cortical cells of the medulla. Expressed in the type I glomic cells within the carotid body (at protein level). Widely expressed. Strongly expressed in esophagus, liver, pancreas, kidney, brain, hypothalamus, thyroid and ovary. Expressed in the zona glomerulosa (ZG) and zona fasciculata/reticularis (ZF/R) of the adrenal gland. Also expressed in stomach, lung, skeletal muscle, heart, uterus, spleen, adrenal gland and testis. Weakly expressed in small intestine, thymus, urinary bladder and adenohypophysis. In the brain, is expressed in the Barrington's nucleus, with lesser amount in the ventrolateral caudal periaqueductal gray (PAG) and in the mesopontine tegmentum.

It is found in the secreted. It localises to the extracellular space. The protein localises to the cytoplasmic vesicle. The protein resides in the secretory vesicle. In terms of biological role, plays a role as a central modulator of cardiovascular and renal function and nociception. Also plays a role in energy metabolism and storage. Inhibits adrenocortical cell proliferation with minor stimulation on corticosteroid release. Functionally, acts as a ligand for galanin receptors GALR2 and GALR3. Intracerebroventricular administration of the peptide induces an increase in arterial blood pressure, a decrease in both heart rate and renal excretion and delayed natriuresis. Intraventricular administration of the peptide induces antinociceptive activity. Intraperitoneal administration of the peptide induces a reduction in food consumption and body weight. Inhibits long chain fatty acid uptake into adipocytes. Also induces contraction of muscarinic-like stomach smooth muscles. Intracerebroventricular administration of the peptide induces a decrease in heart rate, but no change in arterial pressure, and an increase in urine flow rate. Intraventricular administration of the peptide induces antinociceptive activity. The polypeptide is Spexin (SPX) (Rattus norvegicus (Rat)).